The sequence spans 239 residues: Phosphoribosylaminoimidazole-succinocarboxamide synthase (239 aa).

It belongs to the SAICAR synthetase family.

It carries out the reaction 5-amino-1-(5-phospho-D-ribosyl)imidazole-4-carboxylate + L-aspartate + ATP = (2S)-2-[5-amino-1-(5-phospho-beta-D-ribosyl)imidazole-4-carboxamido]succinate + ADP + phosphate + 2 H(+). Its pathway is purine metabolism; IMP biosynthesis via de novo pathway; 5-amino-1-(5-phospho-D-ribosyl)imidazole-4-carboxamide from 5-amino-1-(5-phospho-D-ribosyl)imidazole-4-carboxylate: step 1/2. This is Phosphoribosylaminoimidazole-succinocarboxamide synthase from Bacillus cereus (strain 03BB102).